Here is a 262-residue protein sequence, read N- to C-terminus: Ribosome-recycling factor, mitochondrial (262 aa).

A mitochondrion-targeting transit peptide spans M1–F55.

This sequence belongs to the RRF family.

It is found in the mitochondrion. Functionally, responsible for the disassembly of ribosomes from messenger RNA at the termination of mitochondrial protein biosynthesis. Acts in collaboration with GFM2. Promotes mitochondrial ribosome recycling by dissolution of intersubunit contacts. The chain is Ribosome-recycling factor, mitochondrial from Homo sapiens (Human).